The chain runs to 353 residues: Chloroplastic lipocalin (353 aa).

A compositionally biased stretch (low complexity) spans 1 to 18 (MILLSSSISLSRPVSSQS). A disordered region spans residues 1-27 (MILLSSSISLSRPVSSQSFSPPAATST). The N-terminal 39 residues, 1–39 (MILLSSSISLSRPVSSQSFSPPAATSTRRSHSSVTVKCC), are a transit peptide targeting the chloroplast. Cysteine 163 and cysteine 299 are oxidised to a cystine.

It belongs to the calycin superfamily. Lipocalin family. As to expression, expressed in leaves at low levels (at protein levels). Present in seeds.

The protein resides in the plastid. It is found in the chloroplast thylakoid lumen. In terms of biological role, lipocalin that prevents thylakoidal membrane lipids peroxidation and confers protection against oxidative stress, especially mediated by singlet oxygen in response to high light and other stress (e.g. heat shocks). Required for seed longevity by ensuring polyunsaturated lipids integrity. In Arabidopsis thaliana (Mouse-ear cress), this protein is Chloroplastic lipocalin.